A 348-amino-acid polypeptide reads, in one-letter code: DnaJ homolog subfamily B member 5 (348 aa).

The region spanning 4–68 (DYYKILGIPS…KKRGLYDQYG (65 aa)) is the J domain.

The protein is DnaJ homolog subfamily B member 5 (DNAJB5) of Homo sapiens (Human).